The following is a 506-amino-acid chain: ATP synthase subunit alpha (506 aa).

170–177 is an ATP binding site; the sequence is GDRQTGKT.

It belongs to the ATPase alpha/beta chains family. In terms of assembly, F-type ATPases have 2 components, CF(1) - the catalytic core - and CF(0) - the membrane proton channel. CF(1) has five subunits: alpha(3), beta(3), gamma(1), delta(1), epsilon(1). CF(0) has four main subunits: a(1), b(1), b'(1) and c(9-12).

It localises to the cellular thylakoid membrane. The catalysed reaction is ATP + H2O + 4 H(+)(in) = ADP + phosphate + 5 H(+)(out). Functionally, produces ATP from ADP in the presence of a proton gradient across the membrane. The alpha chain is a regulatory subunit. The chain is ATP synthase subunit alpha from Synechococcus sp. (strain CC9311).